The primary structure comprises 437 residues: tRNA(Ile2) 2-agmatinylcytidine synthetase TiaS (437 aa).

This sequence belongs to the TiaS family.

It localises to the cytoplasm. The enzyme catalyses cytidine(34) in tRNA(Ile2) + agmatine + ATP + H2O = 2-agmatinylcytidine(34) in tRNA(Ile2) + AMP + 2 phosphate + 2 H(+). ATP-dependent agmatine transferase that catalyzes the formation of 2-agmatinylcytidine (agm2C) at the wobble position (C34) of tRNA(Ile2), converting the codon specificity from AUG to AUA. The polypeptide is tRNA(Ile2) 2-agmatinylcytidine synthetase TiaS (Thermoplasma volcanium (strain ATCC 51530 / DSM 4299 / JCM 9571 / NBRC 15438 / GSS1)).